A 126-amino-acid polypeptide reads, in one-letter code: Holo-[acyl-carrier-protein] synthase (126 aa).

Mg(2+)-binding residues include D8 and E57.

This sequence belongs to the P-Pant transferase superfamily. AcpS family. The cofactor is Mg(2+).

The protein resides in the cytoplasm. It carries out the reaction apo-[ACP] + CoA = holo-[ACP] + adenosine 3',5'-bisphosphate + H(+). Functionally, transfers the 4'-phosphopantetheine moiety from coenzyme A to a Ser of acyl-carrier-protein. The sequence is that of Holo-[acyl-carrier-protein] synthase from Leptospira interrogans serogroup Icterohaemorrhagiae serovar copenhageni (strain Fiocruz L1-130).